A 313-amino-acid polypeptide reads, in one-letter code: MYVSYLLDKDVSMYPSSVRHSGGLNLAPQNFVSPPQYPDYGGYHVAAAAAAAANLDSAQSPGPSWSTAYGAPLREDWNGYPPGGAAAANAVAHGLNGGSPAAAMGYSSPADYHAHHHPHHHPHHPAAAPSCASGLLQTLNPGPPGPAATGAAEQLSPSGQRRNLCEWMRKPAQPSLGSQVKTRTKDKYRVVYTDHQRLELEKEFHYSRYITIRRKAELAATLGLSERQVKIWFQNRRAKERKINKKKLQQQQQQQQQQQLASPPPQPSQPQPGSLRSVPEPLSPVSSLQGSVPGSVPGVLGPAGGVLNPTVTQ.

At Ser60 the chain carries Phosphoserine. Residues 113–153 (HAHHHPHHHPHHPAAAPSCASGLLQTLNPGPPGPAATGAAE) form a disordered region. Over residues 114-124 (AHHHPHHHPHH) the composition is skewed to basic residues. The tract at residues 185–215 (KDKYRVVYTDHQRLELEKEFHYSRYITIRRK) is interaction with DNA. The segment at residues 185 to 244 (KDKYRVVYTDHQRLELEKEFHYSRYITIRRKAELAATLGLSERQVKIWFQNRRAKERKIN) is a DNA-binding region (homeobox). The tract at residues 227 to 241 (RQVKIWFQNRRAKER) is interaction with 5-mCpG DNA. Residues 242 to 313 (KINKKKLQQQ…GGVLNPTVTQ (72 aa)) form a disordered region. Composition is skewed to low complexity over residues 249–261 (QQQQ…QQLA) and 271–300 (QPGS…PGVL). Ser283 bears the Phosphoserine mark. The short motif at 283 to 295 (SPVSSLQGSVPGS) is the 4S motif; modulates transactivation activity and protein stability element.

It belongs to the Caudal homeobox family. Can bind DNA as a monomer or homodimer. In terms of processing, ubiquitinated, leading to its degradation by the proteasome. Phosphorylation at Ser-60 reduces transactivation capacity. Phosphorylation at Ser-283 reduces transactivation capacity and also increases ubiquitin-dependent proteasome degradation. Expressed in the intestine.

It localises to the nucleus. Its function is as follows. Transcription factor which regulates the transcription of multiple genes expressed in the intestinal epithelium. Binds to the promoter of the intestinal sucrase-isomaltase SI and activates SI transcription. Binds to the DNA sequence 5'-ATAAAAACTTAT-3' in the promoter region of VDR and activates VDR transcription. Binds to and activates transcription of LPH. Activates transcription of CLDN2 and intestinal mucin MUC2. Binds to the 5'-AATTTTTTACAACACCT-3' DNA sequence in the promoter region of CA1 and activates CA1 transcription. Important in broad range of functions from early differentiation to maintenance of the intestinal epithelial lining of both the small and large intestine. Binds preferentially to methylated DNA. The sequence is that of Homeobox protein CDX-2 (CDX2) from Mesocricetus auratus (Golden hamster).